The chain runs to 138 residues: Protein FAM136A (138 aa).

It belongs to the FAM136 family.

The chain is Protein FAM136A (fam136a) from Xenopus laevis (African clawed frog).